The following is an 891-amino-acid chain: Alanine--tRNA ligase (891 aa).

4 residues coordinate Zn(2+): H576, H580, C684, and H688.

This sequence belongs to the class-II aminoacyl-tRNA synthetase family. The cofactor is Zn(2+).

It is found in the cytoplasm. It carries out the reaction tRNA(Ala) + L-alanine + ATP = L-alanyl-tRNA(Ala) + AMP + diphosphate. Functionally, catalyzes the attachment of alanine to tRNA(Ala) in a two-step reaction: alanine is first activated by ATP to form Ala-AMP and then transferred to the acceptor end of tRNA(Ala). Also edits incorrectly charged Ser-tRNA(Ala) and Gly-tRNA(Ala) via its editing domain. The sequence is that of Alanine--tRNA ligase from Orientia tsutsugamushi (strain Boryong) (Rickettsia tsutsugamushi).